Consider the following 308-residue polypeptide: Homogentisate phytyltransferase (308 aa).

Helical transmembrane passes span 13–33, 44–64, 104–124, 142–162, 173–193, 219–241, 245–263, and 279–299; these read PHTI…TILG, LDLV…IVGL, LAIA…SLII, AALC…FLFF, ITPI…IAIF, VFRG…GLWA, LNTA…LLWW, and FYQF…LALW.

This sequence belongs to the UbiA prenyltransferase family.

Its subcellular location is the membrane. The catalysed reaction is phytyl diphosphate + homogentisate + H(+) = 2-methyl-6-phytyl-1,4-benzene-1,4-diol + CO2 + diphosphate. The protein operates within cofactor biosynthesis; tocopherol biosynthesis. In terms of biological role, involved in the synthesis of tocopherol (vitamin E). Catalyzes the condensation of homogentisate and phytyl diphosphate to form dimethylphytylhydrquinone. The protein is Homogentisate phytyltransferase of Synechocystis sp. (strain ATCC 27184 / PCC 6803 / Kazusa).